The following is a 240-amino-acid chain: DNA repair protein RecO (240 aa).

This sequence belongs to the RecO family.

In terms of biological role, involved in DNA repair and RecF pathway recombination. This is DNA repair protein RecO from Xanthomonas oryzae pv. oryzae (strain MAFF 311018).